The following is a 376-amino-acid chain: Beta-centractin (376 aa).

Met-1 is subject to N-acetylmethionine. Tyr-4 carries the post-translational modification 3'-nitrotyrosine.

Belongs to the actin family. ARP1 subfamily.

Its subcellular location is the cytoplasm. It localises to the cytoskeleton. The protein localises to the microtubule organizing center. The protein resides in the centrosome. In terms of biological role, component of a multi-subunit complex involved in microtubule based vesicle motility. It is associated with the centrosome. This Mus musculus (Mouse) protein is Beta-centractin (Actr1b).